A 304-amino-acid chain; its full sequence is UDP-N-acetylenolpyruvoylglucosamine reductase (304 aa).

The FAD-binding PCMH-type domain occupies 31-196 (KVGGPADYLA…ISAKFNLKPG (166 aa)). Residue Arg-175 is part of the active site. Catalysis depends on Ser-225, which acts as the Proton donor. Glu-295 is a catalytic residue.

The protein belongs to the MurB family. FAD is required as a cofactor.

It is found in the cytoplasm. It carries out the reaction UDP-N-acetyl-alpha-D-muramate + NADP(+) = UDP-N-acetyl-3-O-(1-carboxyvinyl)-alpha-D-glucosamine + NADPH + H(+). The protein operates within cell wall biogenesis; peptidoglycan biosynthesis. Functionally, cell wall formation. The polypeptide is UDP-N-acetylenolpyruvoylglucosamine reductase (Streptococcus thermophilus (strain CNRZ 1066)).